The primary structure comprises 413 residues: Serine/threonine transporter SstT (413 aa).

9 helical membrane-spanning segments follow: residues 21–41 (IGLL…SALG), 61–81 (SVAP…KKVG), 89–109 (IIYL…FASF), 146–166 (ITAL…GLGI), 189–209 (IVHF…ASTL), 224–244 (LAVL…IIVF), 305–325 (MGGA…TLGI), 337–357 (LVAS…LLLI), and 363–383 (LFGI…IIGV).

This sequence belongs to the dicarboxylate/amino acid:cation symporter (DAACS) (TC 2.A.23) family.

The protein localises to the cell inner membrane. It catalyses the reaction L-serine(in) + Na(+)(in) = L-serine(out) + Na(+)(out). The enzyme catalyses L-threonine(in) + Na(+)(in) = L-threonine(out) + Na(+)(out). Its function is as follows. Involved in the import of serine and threonine into the cell, with the concomitant import of sodium (symport system). This chain is Serine/threonine transporter SstT, found in Mannheimia succiniciproducens (strain KCTC 0769BP / MBEL55E).